The primary structure comprises 440 residues: ATP-dependent protease ATPase subunit HslU (440 aa).

ATP-binding positions include Ile-18, Gly-60–Glu-65, Asp-253, Glu-318, and Arg-390.

Belongs to the ClpX chaperone family. HslU subfamily. In terms of assembly, a double ring-shaped homohexamer of HslV is capped on each side by a ring-shaped HslU homohexamer. The assembly of the HslU/HslV complex is dependent on binding of ATP.

The protein localises to the cytoplasm. ATPase subunit of a proteasome-like degradation complex; this subunit has chaperone activity. The binding of ATP and its subsequent hydrolysis by HslU are essential for unfolding of protein substrates subsequently hydrolyzed by HslV. HslU recognizes the N-terminal part of its protein substrates and unfolds these before they are guided to HslV for hydrolysis. This Shewanella oneidensis (strain ATCC 700550 / JCM 31522 / CIP 106686 / LMG 19005 / NCIMB 14063 / MR-1) protein is ATP-dependent protease ATPase subunit HslU.